The sequence spans 663 residues: DNA ligase (663 aa).

NAD(+)-binding positions include 33-37 (DYSYD), 82-83 (SI), and glutamate 112. Catalysis depends on lysine 114, which acts as the N6-AMP-lysine intermediate. Arginine 135, glutamate 171, lysine 285, and lysine 309 together coordinate NAD(+). The Zn(2+) site is built by cysteine 403, cysteine 406, cysteine 419, and cysteine 424. Positions 581-663 (DKEAPLQGKV…LRILDAKSVS (83 aa)) constitute a BRCT domain.

It belongs to the NAD-dependent DNA ligase family. LigA subfamily. Requires Mg(2+) as cofactor. Mn(2+) serves as cofactor.

The enzyme catalyses NAD(+) + (deoxyribonucleotide)n-3'-hydroxyl + 5'-phospho-(deoxyribonucleotide)m = (deoxyribonucleotide)n+m + AMP + beta-nicotinamide D-nucleotide.. Its function is as follows. DNA ligase that catalyzes the formation of phosphodiester linkages between 5'-phosphoryl and 3'-hydroxyl groups in double-stranded DNA using NAD as a coenzyme and as the energy source for the reaction. It is essential for DNA replication and repair of damaged DNA. This is DNA ligase from Chlamydia trachomatis serovar A (strain ATCC VR-571B / DSM 19440 / HAR-13).